Here is a 587-residue protein sequence, read N- to C-terminus: Aspartate--tRNA ligase (587 aa).

Glu175 serves as a coordination point for L-aspartate. Residues 199 to 202 are aspartate; it reads QQFK. The L-aspartate site is built by Arg221 and His446. ATP is bound at residue 221-223; the sequence is RDE. Glu480 is a binding site for ATP. Arg487 serves as a coordination point for L-aspartate. 532 to 535 serves as a coordination point for ATP; that stretch reads GVDR.

This sequence belongs to the class-II aminoacyl-tRNA synthetase family. Type 1 subfamily. As to quaternary structure, homodimer.

It is found in the cytoplasm. It carries out the reaction tRNA(Asp) + L-aspartate + ATP = L-aspartyl-tRNA(Asp) + AMP + diphosphate. In terms of biological role, catalyzes the attachment of L-aspartate to tRNA(Asp) in a two-step reaction: L-aspartate is first activated by ATP to form Asp-AMP and then transferred to the acceptor end of tRNA(Asp). In Streptomyces avermitilis (strain ATCC 31267 / DSM 46492 / JCM 5070 / NBRC 14893 / NCIMB 12804 / NRRL 8165 / MA-4680), this protein is Aspartate--tRNA ligase.